The sequence spans 319 residues: Ornithine carbamoyltransferase (319 aa).

Carbamoyl phosphate contacts are provided by residues 63–66, glutamine 90, arginine 114, and 141–144; these read STRT and HPCQ. L-ornithine is bound by residues asparagine 172, aspartate 236, and 240-241; that span reads SM. Carbamoyl phosphate is bound by residues 276–277 and arginine 304; that span reads CL.

It belongs to the aspartate/ornithine carbamoyltransferase superfamily. OTCase family.

The protein resides in the cytoplasm. It carries out the reaction carbamoyl phosphate + L-ornithine = L-citrulline + phosphate + H(+). It participates in amino-acid biosynthesis; L-arginine biosynthesis; L-arginine from L-ornithine and carbamoyl phosphate: step 1/3. In terms of biological role, reversibly catalyzes the transfer of the carbamoyl group from carbamoyl phosphate (CP) to the N(epsilon) atom of ornithine (ORN) to produce L-citrulline. This is Ornithine carbamoyltransferase from Halalkalibacterium halodurans (strain ATCC BAA-125 / DSM 18197 / FERM 7344 / JCM 9153 / C-125) (Bacillus halodurans).